A 153-amino-acid chain; its full sequence is 6,7-dimethyl-8-ribityllumazine synthase (153 aa).

5-amino-6-(D-ribitylamino)uracil-binding positions include Phe22, Ala56 to Glu58, and Ala80 to Ile82. Ser85–Thr86 contributes to the (2S)-2-hydroxy-3-oxobutyl phosphate binding site. His88 functions as the Proton donor in the catalytic mechanism. Phe113 lines the 5-amino-6-(D-ribitylamino)uracil pocket. (2S)-2-hydroxy-3-oxobutyl phosphate is bound at residue Arg127.

Belongs to the DMRL synthase family.

It carries out the reaction (2S)-2-hydroxy-3-oxobutyl phosphate + 5-amino-6-(D-ribitylamino)uracil = 6,7-dimethyl-8-(1-D-ribityl)lumazine + phosphate + 2 H2O + H(+). Its pathway is cofactor biosynthesis; riboflavin biosynthesis; riboflavin from 2-hydroxy-3-oxobutyl phosphate and 5-amino-6-(D-ribitylamino)uracil: step 1/2. Its function is as follows. Catalyzes the formation of 6,7-dimethyl-8-ribityllumazine by condensation of 5-amino-6-(D-ribitylamino)uracil with 3,4-dihydroxy-2-butanone 4-phosphate. This is the penultimate step in the biosynthesis of riboflavin. The polypeptide is 6,7-dimethyl-8-ribityllumazine synthase (Clostridium botulinum (strain Alaska E43 / Type E3)).